Consider the following 308-residue polypeptide: Coenzyme PQQ synthesis protein B (308 aa).

The protein belongs to the PqqB family.

The protein operates within cofactor biosynthesis; pyrroloquinoline quinone biosynthesis. May be involved in the transport of PQQ or its precursor to the periplasm. The polypeptide is Coenzyme PQQ synthesis protein B (Klebsiella pneumoniae (strain 342)).